The chain runs to 495 residues: Potassium voltage-gated channel subfamily A member 1 (495 aa).

A disordered region spans residues 1-30 (MTVMSGENADEASAAPGHPQDGSYPRQADH). The segment at 1–128 (MTVMSGENAD…FYELGEEAME (128 aa)) is tetramerization domain. The Cytoplasmic portion of the chain corresponds to 1–164 (MTVMSGENAD…LLFEYPESSG (164 aa)). At Ser23 the chain carries Phosphoserine. A helical membrane pass occupies residues 165-186 (PARVIAIVSVMVILISIVIFCL). Residues 187–220 (ETLPELKDDKDFTGTIHRIDNTTVIYTSNIFTDP) lie on the Extracellular side of the membrane. The N-linked (GlcNAc...) asparagine glycan is linked to Asn207. Residues 221-242 (FFIVETLCIIWFSFELVVRFFA) traverse the membrane as a helical segment. Cys243 carries S-palmitoyl cysteine lipidation. Residues 243–253 (CPSKTDFFKNI) are Cytoplasmic-facing. Residues 254 to 274 (MNFIDIVAIIPYFITLGTEIA) form a helical membrane-spanning segment. The Extracellular portion of the chain corresponds to 275-287 (EQEGNQKGEQATS). The helical; Voltage-sensor transmembrane segment at 288–308 (LAILRVIRLVRVFRIFKLSRH) threads the bilayer. Over 309–323 (SKGLQILGQTLKASM) the chain is Cytoplasmic. Residues 310 to 323 (KGLQILGQTLKASM) are S4-S5 linker. Ser322 is subject to Phosphoserine; by PKA. The chain crosses the membrane as a helical span at residues 324 to 345 (RELGLLIFFLFIGVILFSSAVY). Over 346–359 (FAEAEEAESHFSSI) the chain is Extracellular. An intramembrane region (helical) is located at residues 360 to 371 (PDAFWWAVVSMT). The Selectivity filter signature appears at 372-377 (TVGYGD). Residues 372–379 (TVGYGDMY) lie within the membrane without spanning it. Over 380–386 (PVTIGGK) the chain is Extracellular. Residues 387–415 (IVGSLCAIAGVLTIALPVPVIVSNFNYFY) traverse the membrane as a helical segment. Over 416-495 (HRETEGEEQA…VNKSKLLTDV (80 aa)) the chain is Cytoplasmic. Ser437 and Ser439 each carry phosphoserine. Position 446 is a phosphoserine; by PKA (Ser446). Residues 493–495 (TDV) carry the PDZ-binding motif.

Belongs to the potassium channel family. A (Shaker) (TC 1.A.1.2) subfamily. Kv1.1/KCNA1 sub-subfamily. In terms of assembly, homotetramer and heterotetramer with other channel-forming alpha subunits, such as KCNA2, KCNA4, KCNA5, KCNA6 and KCNA7. Channel activity is regulated by interaction with the beta subunits KCNAB1 and KCNAB2. Identified in a complex with KCNA2 and KCNAB2. Interacts (via C-terminus) with the PDZ domains of DLG1, DLG2 and DLG4. Interacts with LGI1 within a complex containing LGI1, KCNA4 and KCNAB1. Interacts (via cytoplasmic N-terminal domain) with KCNRG; this inhibits channel activity. Interacts with ANK3; this inhibits channel activity. Interacts (via N-terminus) with STX1A; this promotes channel inactivation. Interacts (via N-terminus) with the heterodimer formed by GNB1 and GNG2; this promotes channel inactivation. Can interact simultaneously with STX1A and the heterodimer formed by GNB1 and GNG2. Interacts with ADAM11. Post-translationally, palmitoylated on Cys-243; which may be required for membrane targeting. N-glycosylated. In terms of processing, phosphorylated on tyrosine residues. Phosphorylation increases in response to NRG1; this inhibits channel activity. Phosphorylated by PKA. Phosphorylation at Ser-446 regulates channel activity by down-regulating expression at the cell membrane. As to expression, detected in hippocampus, in the middle third of the molecular layer of the dentate gyrus and in stratum radiatum and stratum oriens. Detected in the mossy fiber zone in the hippocampus CA3 region, at or near axon terminals. Detected in brain cortex, at basket cell terminals. Detected adjacent to nodes of Ranvier in juxtaparanodal zones in spinal cord nerve fibers, but also in paranodal regions in some myelinated spinal cord axons. Detected in juxtaparanodal regions adjacent to the nodes of Ranvier in myelinated axons in cerebellar white matter. Detected in sensory neurons. Detected in neurons from the medial nucleus of the trapezoid body. Detected in basolateral amygdala. Detected in the paraventricular nucleus of the hypothalamus. Detected in the islet of Langerhans (at protein level).

The protein resides in the cell membrane. It localises to the membrane. It is found in the cell projection. Its subcellular location is the axon. The protein localises to the cytoplasmic vesicle. The protein resides in the perikaryon. It localises to the endoplasmic reticulum. It is found in the dendrite. Its subcellular location is the cell junction. The protein localises to the synapse. The protein resides in the presynapse. It localises to the presynaptic cell membrane. It carries out the reaction K(+)(in) = K(+)(out). Its activity is regulated as follows. Inhibited by 4-aminopyridine (4-AP) and by tetraethylammonium (TEA). Inhibited by kaliotoxin (KTX). Voltage-gated potassium channel that mediates transmembrane potassium transport in excitable membranes, primarily in the brain and the central nervous system, but also in the kidney. Contributes to the regulation of the membrane potential and nerve signaling, and prevents neuronal hyperexcitability. Forms tetrameric potassium-selective channels through which potassium ions pass in accordance with their electrochemical gradient. The channel alternates between opened and closed conformations in response to the voltage difference across the membrane. Can form functional homotetrameric channels and heterotetrameric channels that contain variable proportions of KCNA1, KCNA2, KCNA4, KCNA5, KCNA6, KCNA7, and possibly other family members as well; channel properties depend on the type of alpha subunits that are part of the channel. Channel properties are modulated by cytoplasmic beta subunits that regulate the subcellular location of the alpha subunits and promote rapid inactivation of delayed rectifier potassium channels. In vivo, membranes probably contain a mixture of heteromeric potassium channel complexes, making it difficult to assign currents observed in intact tissues to any particular potassium channel family member. Homotetrameric KCNA1 forms a delayed-rectifier potassium channel that opens in response to membrane depolarization, followed by slow spontaneous channel closure. In contrast, a heterotetrameric channel formed by KCNA1 and KCNA4 shows rapid inactivation. Regulates neuronal excitability in hippocampus, especially in mossy fibers and medial perforant path axons, preventing neuronal hyperexcitability. Response to toxins that are selective for KCNA1, respectively for KCNA2, suggests that heteromeric potassium channels composed of both KCNA1 and KCNA2 play a role in pacemaking and regulate the output of deep cerebellar nuclear neurons. May function as down-stream effector for G protein-coupled receptors and inhibit GABAergic inputs to basolateral amygdala neurons. May contribute to the regulation of neurotransmitter release, such as gamma-aminobutyric acid (GABA) release. Plays a role in regulating the generation of action potentials and preventing hyperexcitability in myelinated axons of the vagus nerve, and thereby contributes to the regulation of heart contraction. Required for normal neuromuscular responses. Regulates the frequency of neuronal action potential firing in response to mechanical stimuli, and plays a role in the perception of pain caused by mechanical stimuli, but does not play a role in the perception of pain due to heat stimuli. Required for normal responses to auditory stimuli and precise location of sound sources, but not for sound perception. The use of toxins that block specific channels suggest that it contributes to the regulation of the axonal release of the neurotransmitter dopamine. Required for normal postnatal brain development and normal proliferation of neuronal precursor cells in the brain. Plays a role in the reabsorption of Mg(2+) in the distal convoluted tubules in the kidney and in magnesium ion homeostasis, probably via its effect on the membrane potential. The polypeptide is Potassium voltage-gated channel subfamily A member 1 (Rattus norvegicus (Rat)).